The chain runs to 319 residues: ATP-dependent 6-phosphofructokinase (319 aa).

ATP is bound by residues glycine 10, 71–72 (RS), and 101–104 (GDGS). Mg(2+) is bound at residue aspartate 102. A substrate-binding site is contributed by 125 to 127 (TID). Aspartate 127 acts as the Proton acceptor in catalysis. An ADP-binding site is contributed by arginine 154. Residues arginine 162 and 169–171 (MGR) contribute to the substrate site. 185–187 (GAE) contacts ADP. Substrate is bound by residues glutamate 223, arginine 244, and 250-253 (HVQR).

Belongs to the phosphofructokinase type A (PFKA) family. ATP-dependent PFK group I subfamily. Prokaryotic clade 'B1' sub-subfamily. In terms of assembly, homotetramer. Mg(2+) serves as cofactor.

The protein resides in the cytoplasm. The catalysed reaction is beta-D-fructose 6-phosphate + ATP = beta-D-fructose 1,6-bisphosphate + ADP + H(+). The protein operates within carbohydrate degradation; glycolysis; D-glyceraldehyde 3-phosphate and glycerone phosphate from D-glucose: step 3/4. Its activity is regulated as follows. Allosterically activated by ADP and other diphosphonucleosides, and allosterically inhibited by phosphoenolpyruvate. Catalyzes the phosphorylation of D-fructose 6-phosphate to fructose 1,6-bisphosphate by ATP, the first committing step of glycolysis. The chain is ATP-dependent 6-phosphofructokinase from Wolinella succinogenes (strain ATCC 29543 / DSM 1740 / CCUG 13145 / JCM 31913 / LMG 7466 / NCTC 11488 / FDC 602W) (Vibrio succinogenes).